The following is a 272-amino-acid chain: ATP synthase subunit a (272 aa).

The next 5 helical transmembrane spans lie at 41 to 61, 101 to 121, 147 to 167, 212 to 232, and 243 to 263; these read TLNI…LVLF, LIAP…LMDL, DVNI…FYSI, LFGN…LLPW, and AIFH…LTIV.

This sequence belongs to the ATPase A chain family. F-type ATPases have 2 components, CF(1) - the catalytic core - and CF(0) - the membrane proton channel. CF(1) has five subunits: alpha(3), beta(3), gamma(1), delta(1), epsilon(1). CF(0) has three main subunits: a(1), b(2) and c(9-12). The alpha and beta chains form an alternating ring which encloses part of the gamma chain. CF(1) is attached to CF(0) by a central stalk formed by the gamma and epsilon chains, while a peripheral stalk is formed by the delta and b chains.

It is found in the cell inner membrane. Functionally, key component of the proton channel; it plays a direct role in the translocation of protons across the membrane. The chain is ATP synthase subunit a from Cronobacter sakazakii (strain ATCC BAA-894) (Enterobacter sakazakii).